A 440-amino-acid polypeptide reads, in one-letter code: Guanine/hypoxanthine permease PbuG (440 aa).

Helical transmembrane passes span Ile18 to Thr38, Ala57 to Ala77, Ile81 to Met101, Ala107 to Phe127, Ala142 to Ile162, Ile175 to Val195, Gly201 to Val221, Met251 to Val271, Ala291 to Thr311, Gly327 to Leu347, Val354 to Ala374, Met388 to Tyr408, and Lys419 to Leu439.

It belongs to the nucleobase:cation symporter-2 (NCS2) (TC 2.A.40) family. Azg-like subfamily.

Its subcellular location is the cell membrane. Functionally, involved in the uptake of the purine bases hypoxanthine and guanine. The chain is Guanine/hypoxanthine permease PbuG (pbuG) from Bacillus subtilis (strain 168).